Here is a 361-residue protein sequence, read N- to C-terminus: 5-formaminoimidazole-4-carboxamide-1-(beta)-D-ribofuranosyl 5'-monophosphate synthetase (361 aa).

The 5-amino-1-(5-phospho-beta-D-ribosyl)imidazole-4-carboxamide site is built by His27 and Ser94. The ATP-grasp domain maps to 116–348; sequence RAILRWEAER…MGQRIAKEIK (233 aa). Residues 146-208 and Glu230 contribute to the ATP site; that span reads PDEI…ANYC. Asn258 provides a ligand contact to 5-amino-1-(5-phospho-beta-D-ribosyl)imidazole-4-carboxamide. Residues Gln297 and Glu310 each coordinate Mg(2+).

It belongs to the phosphohexose mutase family. Mg(2+) serves as cofactor. Mn(2+) is required as a cofactor.

The catalysed reaction is 5-amino-1-(5-phospho-beta-D-ribosyl)imidazole-4-carboxamide + formate + ATP = 5-formamido-1-(5-phospho-D-ribosyl)imidazole-4-carboxamide + ADP + phosphate. It functions in the pathway purine metabolism; IMP biosynthesis via de novo pathway; 5-formamido-1-(5-phospho-D-ribosyl)imidazole-4-carboxamide from 5-amino-1-(5-phospho-D-ribosyl)imidazole-4-carboxamide (formate route): step 1/1. Catalyzes the ATP- and formate-dependent formylation of 5-aminoimidazole-4-carboxamide-1-beta-d-ribofuranosyl 5'-monophosphate (AICAR) to 5-formaminoimidazole-4-carboxamide-1-beta-d-ribofuranosyl 5'-monophosphate (FAICAR) in the absence of folates. The sequence is that of 5-formaminoimidazole-4-carboxamide-1-(beta)-D-ribofuranosyl 5'-monophosphate synthetase from Methanococcus vannielii (strain ATCC 35089 / DSM 1224 / JCM 13029 / OCM 148 / SB).